Here is a 155-residue protein sequence, read N- to C-terminus: MPRYFEGKLDAKGQKIGIVVSRFNSFITERLLEGAVDALVRHGADEQEIHIARVPGAFEIPLAAKKMAASGAYDAIIALGAVIRGSTPHFDYVSSEVTKGVAAVSLESGVPISFGVLTTDSIEQAVERAGTKAGNKGFEAAVTVIETVNLLRSIN.

Residues phenylalanine 23, 57–59 (AFE), and 81–83 (AVI) each bind 5-amino-6-(D-ribitylamino)uracil. (2S)-2-hydroxy-3-oxobutyl phosphate is bound at residue 86–87 (ST). Histidine 89 (proton donor) is an active-site residue. Position 114 (phenylalanine 114) interacts with 5-amino-6-(D-ribitylamino)uracil. Arginine 128 is a (2S)-2-hydroxy-3-oxobutyl phosphate binding site.

It belongs to the DMRL synthase family.

The catalysed reaction is (2S)-2-hydroxy-3-oxobutyl phosphate + 5-amino-6-(D-ribitylamino)uracil = 6,7-dimethyl-8-(1-D-ribityl)lumazine + phosphate + 2 H2O + H(+). The protein operates within cofactor biosynthesis; riboflavin biosynthesis; riboflavin from 2-hydroxy-3-oxobutyl phosphate and 5-amino-6-(D-ribitylamino)uracil: step 1/2. In terms of biological role, catalyzes the formation of 6,7-dimethyl-8-ribityllumazine by condensation of 5-amino-6-(D-ribitylamino)uracil with 3,4-dihydroxy-2-butanone 4-phosphate. This is the penultimate step in the biosynthesis of riboflavin. In Pelobacter propionicus (strain DSM 2379 / NBRC 103807 / OttBd1), this protein is 6,7-dimethyl-8-ribityllumazine synthase.